A 333-amino-acid chain; its full sequence is L-lactate dehydrogenase B chain (333 aa).

NAD(+) contacts are provided by residues 29 to 57 (GQVG…LEDK) and Arg99. Substrate-binding residues include Arg106, Asn138, and Arg169. Position 138 (Asn138) interacts with NAD(+). The active-site Proton acceptor is the His193. Thr248 lines the substrate pocket.

This sequence belongs to the LDH/MDH superfamily. LDH family. Homotetramer.

It localises to the cytoplasm. It carries out the reaction (S)-lactate + NAD(+) = pyruvate + NADH + H(+). Its pathway is fermentation; pyruvate fermentation to lactate; (S)-lactate from pyruvate: step 1/1. Interconverts simultaneously and stereospecifically pyruvate and lactate with concomitant interconversion of NADH and NAD(+). The chain is L-lactate dehydrogenase B chain (LDHB) from Gallus gallus (Chicken).